A 230-amino-acid polypeptide reads, in one-letter code: 7-cyano-7-deazaguanine synthase (230 aa).

8 to 18 contacts ATP; the sequence is LSGGMDSAVVT. Zn(2+) is bound by residues C186, C196, C199, and C202.

This sequence belongs to the QueC family. Zn(2+) is required as a cofactor.

It catalyses the reaction 7-carboxy-7-deazaguanine + NH4(+) + ATP = 7-cyano-7-deazaguanine + ADP + phosphate + H2O + H(+). It participates in purine metabolism; 7-cyano-7-deazaguanine biosynthesis. Functionally, catalyzes the ATP-dependent conversion of 7-carboxy-7-deazaguanine (CDG) to 7-cyano-7-deazaguanine (preQ(0)). This Xylella fastidiosa (strain 9a5c) protein is 7-cyano-7-deazaguanine synthase.